We begin with the raw amino-acid sequence, 347 residues long: NADH-ubiquinone oxidoreductase chain 2 (347 aa).

10 helical membrane-spanning segments follow: residues 3–23 (PIILMFIMLTIFMGTMLTMIS), 25–45 (HWLLMWVGLEINMLAIIPILM), 59–79 (YFLTQATASMLLMFSIVINTA), 96–116 (LVTMAALMMKLGMTPFHFWVP), 127–147 (GMLLLTWQKLAPISILLQIFP), 150–170 (NPNIILLIAILSILVGGWGGL), 193–213 (ILMYWPSLTMLNLLIYLMLTI), 240–260 (ITLTILISLLSLGGLPPLTGF), 274–294 (SNIMLATIMAIMALLNLYFYM), and 323–343 (IFLLSPLVILATLTLPLSPAL).

This sequence belongs to the complex I subunit 2 family. Core subunit of respiratory chain NADH dehydrogenase (Complex I) which is composed of 45 different subunits. Interacts with TMEM242.

The protein localises to the mitochondrion inner membrane. The enzyme catalyses a ubiquinone + NADH + 5 H(+)(in) = a ubiquinol + NAD(+) + 4 H(+)(out). Functionally, core subunit of the mitochondrial membrane respiratory chain NADH dehydrogenase (Complex I) which catalyzes electron transfer from NADH through the respiratory chain, using ubiquinone as an electron acceptor. Essential for the catalytic activity and assembly of complex I. The chain is NADH-ubiquinone oxidoreductase chain 2 from Lemur catta (Ring-tailed lemur).